The sequence spans 880 residues: Alanine--tRNA ligase (880 aa).

Zn(2+) contacts are provided by His567, His571, Cys669, and His673.

It belongs to the class-II aminoacyl-tRNA synthetase family. The cofactor is Zn(2+).

It localises to the cytoplasm. It carries out the reaction tRNA(Ala) + L-alanine + ATP = L-alanyl-tRNA(Ala) + AMP + diphosphate. Catalyzes the attachment of alanine to tRNA(Ala) in a two-step reaction: alanine is first activated by ATP to form Ala-AMP and then transferred to the acceptor end of tRNA(Ala). Also edits incorrectly charged Ser-tRNA(Ala) and Gly-tRNA(Ala) via its editing domain. This Bacillus thuringiensis (strain Al Hakam) protein is Alanine--tRNA ligase.